The chain runs to 372 residues: Chaperone protein DnaJ (372 aa).

The 66-residue stretch at 5 to 70 folds into the J domain; sequence DYYDLLEVGR…EKRAGYDRYG (66 aa). The CR-type zinc-finger motif lies at 134–212; it reads GIQAPIHYVT…CGGSGRRRDE (79 aa). Zn(2+) is bound by residues Cys-147, Cys-150, Cys-164, Cys-167, Cys-186, Cys-189, Cys-200, and Cys-203. 4 CXXCXGXG motif repeats span residues 147–154, 164–171, 186–193, and 200–207; these read CDTCQGTG, CHTCQGSG, CTTCYGEG, and CKKCGGSG.

The protein belongs to the DnaJ family. Homodimer. The cofactor is Zn(2+).

It localises to the cytoplasm. In terms of biological role, participates actively in the response to hyperosmotic and heat shock by preventing the aggregation of stress-denatured proteins and by disaggregating proteins, also in an autonomous, DnaK-independent fashion. Unfolded proteins bind initially to DnaJ; upon interaction with the DnaJ-bound protein, DnaK hydrolyzes its bound ATP, resulting in the formation of a stable complex. GrpE releases ADP from DnaK; ATP binding to DnaK triggers the release of the substrate protein, thus completing the reaction cycle. Several rounds of ATP-dependent interactions between DnaJ, DnaK and GrpE are required for fully efficient folding. Also involved, together with DnaK and GrpE, in the DNA replication of plasmids through activation of initiation proteins. The chain is Chaperone protein DnaJ from Wolbachia sp. subsp. Drosophila simulans (strain wRi).